A 196-amino-acid polypeptide reads, in one-letter code: Ribosome-binding factor A (196 aa).

The protein belongs to the RbfA family. In terms of assembly, monomer. Binds 30S ribosomal subunits, but not 50S ribosomal subunits or 70S ribosomes.

Its subcellular location is the cytoplasm. One of several proteins that assist in the late maturation steps of the functional core of the 30S ribosomal subunit. Associates with free 30S ribosomal subunits (but not with 30S subunits that are part of 70S ribosomes or polysomes). Required for efficient processing of 16S rRNA. May interact with the 5'-terminal helix region of 16S rRNA. This Tropheryma whipplei (strain TW08/27) (Whipple's bacillus) protein is Ribosome-binding factor A.